A 138-amino-acid polypeptide reads, in one-letter code: Basic phospholipase A2 ammodytoxin B (138 aa).

An N-terminal signal peptide occupies residues 1-16; that stretch reads MRTLWIVAVCLIGVEG. Cystine bridges form between C42–C131, C44–C60, C59–C111, C65–C138, C66–C104, C73–C97, and C91–C102. 3 residues coordinate Ca(2+): Y43, G45, and G47. The active site involves H63. D64 provides a ligand contact to Ca(2+). Residue D105 is part of the active site.

It belongs to the phospholipase A2 family. Group II subfamily. D49 sub-subfamily. In terms of assembly, monomer. Binds to calmodulin, coagulation factor X (F10), M-type PLA2 receptor (R-180), 14-3-3 proteins gamma (YWHAG) and epsilon (YWHAE), and R25, a mitochondrial membrane protein. Ca(2+) serves as cofactor. In terms of tissue distribution, expressed by the venom gland.

The protein resides in the secreted. Its subcellular location is the host cytoplasm. It localises to the host cytosol. The catalysed reaction is a 1,2-diacyl-sn-glycero-3-phosphocholine + H2O = a 1-acyl-sn-glycero-3-phosphocholine + a fatty acid + H(+). Functionally, snake venom phospholipase A2 (PLA2) that acts as a presynaptic neurotoxin, an inhibitor of blood coagulation, and has been found to bind with high affinity to intracellular proteins. The response of indirectly stimulated neuromuscular preparations to ammodytoxin (Atx) is triphasic. The first phase, the transient inhibition of the acetylcholine (ACh) release, starts soon after the addition of Atx and lasts for several minutes. This phase is probably independent of Atx enzymatic activity. The effect may be due to the specific binding of the toxin to presynaptic receptors. These receptors, called N-type receptors, are still unidentified. It is noteworthy that a neuronal isoform of the M-type PLA2 receptor (R180) has been identified as a high-affinity receptor for Atx in neuronal plasma membranes. It was demonstrated however that this receptor is not essential for expression of neurotoxicity by Atx. The second phase corresponds to an augmentation of neurotransmitter release. A peak is reached 10-20 minutes after exposure of the preparation to Atx and is followed by a gradual reduction. In this phase, the enzymatic activity of Atx of the mammalian is not significant. It is speculated that the increased release of neurotransmitter in this phase is induced by the interference of Atx with voltage-gated potassium channels. Measurements of ionic currents showed however that voltage-gated potassium channels are not affected by Atx. The third phase of the response of neuromuscular preparations to Atx, which corresponds to a complete and irreversible paralysis, is clearly dependent on the hydrolytic activity of the toxin. In addition to its presynaptic neurotoxicity, Atx shows an anticoagulant activity by binding with high affinity to activated coagulation factor X (F10) thus inhibiting the formation of the prothrombinase complex (FX/FV) and its activity (IC(50) is 82 nM). Surprisingly, Atx was discovered to bind intracellular proteins such as calmodulin (CaM), 14-3-3 proteins gamma (YWHAG) and epsilon (YWHAE) (by similarity with AtxC), as well as R25 (by similarity with AtxC), a mitochondrial integral membrane protein found in cerebral cortex. These findings raised a doubt about the dogma of the exclusively extracellular action of PLA2s, defended by the potential instability of these molecules in the reducing environment of the eukaryotic cytosol coupled with their possible inability to act as enzymes in this cellular compartment, due to too low concentration of calcium ions. This hypothesis was challenged efficiently by demonstrating the internalization of AtxA into a culture cells, but still remains to be directly demonstrated in vivo. PLA2 catalyzes the calcium-dependent hydrolysis of the 2-acyl groups in 3-sn-phosphoglycerides. The polypeptide is Basic phospholipase A2 ammodytoxin B (Vipera ammodytes ammodytes (Western sand viper)).